Here is a 127-residue protein sequence, read N- to C-terminus: Glycine cleavage system H protein (127 aa).

Positions 24–105 (AALVGITDFA…YGEGWLVKIR (82 aa)) constitute a Lipoyl-binding domain. K65 carries the N6-lipoyllysine modification.

Belongs to the GcvH family. As to quaternary structure, the glycine cleavage system is composed of four proteins: P, T, L and H. The cofactor is (R)-lipoate.

Functionally, the glycine cleavage system catalyzes the degradation of glycine. The H protein shuttles the methylamine group of glycine from the P protein to the T protein. The chain is Glycine cleavage system H protein from Chlorobium limicola (strain DSM 245 / NBRC 103803 / 6330).